The primary structure comprises 1943 residues: Cadherin-86C (1943 aa).

Positions 1–102 are disordered; sequence MASTSSSQPE…QNQQMQHHWP (102 aa). Residues 1-934 lie on the Extracellular side of the membrane; that stretch reads MASTSSSQPE…TDTQYKAENK (934 aa). The N-linked (GlcNAc...) asparagine glycan is linked to N12. Residues 50-89 are compositionally biased toward basic residues; that stretch reads PHHHHHHHHQHHHHHRLKQHHRHHHHHHRLQHHHHHHQQQ. Positions 90 to 100 are enriched in low complexity; sequence HNHQNQQMQHH. 5 Cadherin domains span residues 238–366, 367–483, 484–600, 601–708, and 709–832; these read CSIT…PPVF, TSAP…PPYF, ENDH…APVF, EQPA…TPIF, and DKDL…SVKF. 7 N-linked (GlcNAc...) asparagine glycosylation sites follow: N244, N419, N531, N579, N585, N612, and N645. An N-linked (GlcNAc...) asparagine glycan is attached at N912. A helical transmembrane segment spans residues 935 to 955; it reads VLFWLLILLATLVALTILILL. The Cytoplasmic segment spans residues 956-1943; the sequence is LCCICSWCPL…NSGGESPQYS (988 aa). 5 disordered regions span residues 1038-1058, 1390-1442, 1458-1516, 1546-1695, and 1707-1895; these read DVGRGQDIGEGDRRHIQSAEE, KPSR…RKRI, EEEE…SHNR, YKHS…ERNV, and KSSV…DDHD. The segment covering 1047-1058 has biased composition (basic and acidic residues); sequence EGDRRHIQSAEE. Basic residues predominate over residues 1426–1442; that stretch reads IKRRRTKKRPRQPRKRI. 2 stretches are compositionally biased toward basic and acidic residues: residues 1486–1497 and 1507–1516; these read QLSDESRKDQSR and HRSESDSHNR. Residues 1552-1568 are compositionally biased toward acidic residues; it reads DFDEDDTEYSIDSDGDE. The span at 1580-1602 shows a compositional bias: basic and acidic residues; the sequence is QENERYRRQERTYAEPENPVDRK. The span at 1633–1667 shows a compositional bias: polar residues; that stretch reads KQTSSEPPHNRVSISKYESTVTENGRKLMSTSTEI. The segment covering 1709–1724 has biased composition (low complexity); that stretch reads SVSGRTSTESSKSQPS. 4 stretches are compositionally biased toward basic and acidic residues: residues 1754 to 1764, 1774 to 1793, 1800 to 1810, and 1837 to 1863; these read TGGRYKPEPAP, LLKEDRALNKQHKPKIETDT, HSEHRFERENA, and KESKSGRESKTSKEAKPKPSPIRENEV. Residues 1879 to 1889 are compositionally biased toward polar residues; it reads HPTQKQLNAST.

As cell intercalation proceeds, a row of stigmatophore cells surrounding the spiracular chamber show expression of Cad86C. Expression is regulated by the Abd-B cascade, requiring sal. Expressed in a broad region of the morphogenetic furrow and in clusters of cells posterior to the morphogenetic furrow. Weakly expressed in the epithelium of wing imaginal disks. In eye imaginal disk cells within the morphogenetic furrow, expression is localized to the apical region.

The protein localises to the cell membrane. Functionally, cadherins are calcium-dependent cell adhesion proteins. They preferentially interact with themselves in a homophilic manner in connecting cells. In Drosophila melanogaster (Fruit fly), this protein is Cadherin-86C (Cad86C).